Consider the following 368-residue polypeptide: DNA-directed RNA polymerase II subunit GRINL1A (368 aa).

Residues Lys-29 to Val-68 are important for transcription repressor activity. Composition is skewed to polar residues over residues Ser-116–Gly-131, Gly-205–Gly-224, and Gln-258–Ser-273. 3 disordered regions span residues Ser-116–Ser-186, Asp-203–Lys-227, and Pro-255–Lys-282. Positions Lys-227 to His-298 are interaction with Pol II. A Phosphoserine modification is found at Ser-270. The important for transcription repressor activity stretch occupies residues Met-299–Lys-314. A coiled-coil region spans residues Thr-301–Arg-335. The segment at Gln-315–Met-340 is interaction with Pol II. The disordered stretch occupies residues Lys-339 to Phe-368. The span at Asp-358–Phe-368 shows a compositional bias: acidic residues.

Belongs to the GRINL1 family. In terms of assembly, component of the Pol II(G) complex, which contains the RNA polymerase II (Pol II) core complex subunits and POLR2M isoform 1. Pol II(G) appears to be an abundant form of Pol II. In terms of processing, dephosphorylated at Ser-270 by the PNUTS-PP1 complex, promoting RNA polymerase II transcription pause-release. As to expression, detected in adult an fetal brain. Detected in heart, kidney, skeletal muscle, small intestine, lung, prostate and testis.

The protein localises to the nucleus. Its function is as follows. Appears to be a stable component of the Pol II(G) complex form of RNA polymerase II (Pol II). Pol II synthesizes mRNA precursors and many functional non-coding RNAs and is the central component of the basal RNA polymerase II transcription machinery. May play a role in the Mediator complex-dependent regulation of transcription activation. Acts as a negative regulator of transcriptional activation; this repression is relieved by the Mediator complex, which restores Pol II(G) activator-dependent transcription to a level equivalent to that of Pol II. In Homo sapiens (Human), this protein is DNA-directed RNA polymerase II subunit GRINL1A (POLR2M).